The primary structure comprises 453 residues: Glutamyl-tRNA(Gln) amidotransferase subunit A (453 aa).

Active-site charge relay system residues include lysine 55 and serine 130. Serine 154 acts as the Acyl-ester intermediate in catalysis.

The protein belongs to the amidase family. GatA subfamily. As to quaternary structure, heterotrimer of A, B and C subunits.

The enzyme catalyses L-glutamyl-tRNA(Gln) + L-glutamine + ATP + H2O = L-glutaminyl-tRNA(Gln) + L-glutamate + ADP + phosphate + H(+). Its function is as follows. Allows the formation of correctly charged Gln-tRNA(Gln) through the transamidation of misacylated Glu-tRNA(Gln) in organisms which lack glutaminyl-tRNA synthetase. The reaction takes place in the presence of glutamine and ATP through an activated gamma-phospho-Glu-tRNA(Gln). This chain is Glutamyl-tRNA(Gln) amidotransferase subunit A, found in Aliarcobacter butzleri (strain RM4018) (Arcobacter butzleri).